A 558-amino-acid polypeptide reads, in one-letter code: Adenine deaminase (558 aa).

Belongs to the metallo-dependent hydrolases superfamily. Adenine deaminase family. Mn(2+) is required as a cofactor.

It catalyses the reaction adenine + H2O + H(+) = hypoxanthine + NH4(+). The polypeptide is Adenine deaminase (Deinococcus deserti (strain DSM 17065 / CIP 109153 / LMG 22923 / VCD115)).